A 200-amino-acid chain; its full sequence is LexA repressor (200 aa).

Active-site for autocatalytic cleavage activity residues include S121 and K158.

The protein belongs to the peptidase S24 family. As to quaternary structure, homodimer.

The catalysed reaction is Hydrolysis of Ala-|-Gly bond in repressor LexA.. Functionally, binds a consensus sequence 5'-TGTTC-N(4)-GAACA-3'; some genes have a tandem consensus sequence and their binding is cooperative. Binds to the promoters of a number of genes, including lexA and splB. Represses a number of genes involved in the response to DNA damage (SOS response). This Opitutus terrae (strain DSM 11246 / JCM 15787 / PB90-1) protein is LexA repressor.